We begin with the raw amino-acid sequence, 114 residues long: Progonadoliberin-2 (114 aa).

A signal peptide spans 1-24 (MASSRRGLLLLLMLLTAHPGPSEA). At G34 the chain carries Glycine amide. The tract at residues 35–59 (GKRALSSAQDPQNALRPPAGSPAQA) is disordered.

The protein belongs to the GnRH family.

The protein localises to the secreted. Its function is as follows. Stimulates the secretion of gonadotropins; it stimulates the secretion of both luteinizing and follicle-stimulating hormones. The protein is Progonadoliberin-2 (GNRH2) of Macaca mulatta (Rhesus macaque).